The primary structure comprises 134 residues: Orexigenic neuropeptide QRFP (134 aa).

An N-terminal signal peptide occupies residues 1–18 (MRSPYSLPYLLFLPLGAC). The propeptide occupies 19-88 (FPVLDTEEPV…RAGFQLRLGR (70 aa)). Phe131 carries the phenylalanine amide modification.

Belongs to the RFamide neuropeptide family. Ligand for the G-protein coupled receptor QRFPR/GPR103. As to expression, expressed in the hypothalamus.

It localises to the secreted. Functionally, stimulates feeding behavior, metabolic rate and locomotor activity and increases blood pressure. May have orexigenic activity. May promote aldosterone secretion by the adrenal gland. The sequence is that of Orexigenic neuropeptide QRFP from Bos taurus (Bovine).